Here is a 194-residue protein sequence, read N- to C-terminus: 3-isopropylmalate dehydratase small subunit (194 aa).

Belongs to the LeuD family. LeuD type 1 subfamily. In terms of assembly, heterodimer of LeuC and LeuD.

The catalysed reaction is (2R,3S)-3-isopropylmalate = (2S)-2-isopropylmalate. Its pathway is amino-acid biosynthesis; L-leucine biosynthesis; L-leucine from 3-methyl-2-oxobutanoate: step 2/4. In terms of biological role, catalyzes the isomerization between 2-isopropylmalate and 3-isopropylmalate, via the formation of 2-isopropylmaleate. The chain is 3-isopropylmalate dehydratase small subunit from Brevibacillus brevis (strain 47 / JCM 6285 / NBRC 100599).